The chain runs to 241 residues: MKILLVFDFDNTIIDDNSDTWIVQCAPNKKLPIELRDSYRKGFWTEFMGRVFKYLGDKGVREHEMKRAVTSLPFTPGMVELFNFIRKNKDKFDCIIISDSNSVFIDWVLEAASFHDIFDKVFTNPAAFNSNGHLTVENYHTHSCNRCPKNLCKKVVLIEFVDKQLQQGVNYTQIVYIGDGGNDVCPVTFLKNDDVAMPRKGYTLQKTLSRMSQNLEPMEYSVVVWSSGVDIISHLQFLIKD.

The active-site Nucleophile is Asp8. Mg(2+) contacts are provided by Asp8 and Asp10. Asp10 acts as the Proton donor in catalysis. Asp19 and Asp99 together coordinate substrate. Asp179 contributes to the Mg(2+) binding site.

Belongs to the HAD-like hydrolase superfamily. PHOSPHO family. Mg(2+) serves as cofactor.

The catalysed reaction is pyridoxal 5'-phosphate + H2O = pyridoxal + phosphate. In terms of biological role, phosphatase that has high activity toward pyridoxal 5'-phosphate (PLP). Also active at much lower level toward pyrophosphate, phosphoethanolamine (PEA), phosphocholine (PCho), phospho-l-tyrosine, fructose-6-phosphate, p-nitrophenyl phosphate, and h-glycerophosphate. This Homo sapiens (Human) protein is Pyridoxal phosphate phosphatase PHOSPHO2 (PHOSPHO2).